The primary structure comprises 468 residues: Chromosomal replication initiator protein DnaA (468 aa).

A domain I, interacts with DnaA modulators region spans residues 1-90 (MTQEKWGLLC…NSPMRPARAA (90 aa)). The domain II stretch occupies residues 91–126 (RPAAAAAAAAAAVEAPQVSAPRATDTSDVLDGLQAA). Residues 127-348 (PLDPRFTFDS…GALTRLFAFA (222 aa)) are domain III, AAA+ region. 4 residues coordinate ATP: glycine 171, glycine 173, lysine 174, and threonine 175. Positions 349 to 468 (SLVGREIDME…VEMLRRALEA (120 aa)) are domain IV, binds dsDNA.

This sequence belongs to the DnaA family. In terms of assembly, oligomerizes as a right-handed, spiral filament on DNA at oriC.

Its subcellular location is the cytoplasm. Plays an essential role in the initiation and regulation of chromosomal replication. ATP-DnaA binds to the origin of replication (oriC) to initiate formation of the DNA replication initiation complex once per cell cycle. Binds the DnaA box (a 9 base pair repeat at the origin) and separates the double-stranded (ds)DNA. Forms a right-handed helical filament on oriC DNA; dsDNA binds to the exterior of the filament while single-stranded (ss)DNA is stabiized in the filament's interior. The ATP-DnaA-oriC complex binds and stabilizes one strand of the AT-rich DNA unwinding element (DUE), permitting loading of DNA polymerase. After initiation quickly degrades to an ADP-DnaA complex that is not apt for DNA replication. Binds acidic phospholipids. In Ruegeria pomeroyi (strain ATCC 700808 / DSM 15171 / DSS-3) (Silicibacter pomeroyi), this protein is Chromosomal replication initiator protein DnaA.